Reading from the N-terminus, the 333-residue chain is Pro-cathepsin H (333 aa).

Residues 1–20 form the signal peptide; that stretch reads MWAALPLLCAGAWLLSTGAT. A propeptide spans 21–95 (activation peptide); that stretch reads AELTVNAIEK…AEIKHKFLWS (75 aa). N-linked (GlcNAc...) asparagine glycosylation is found at N70 and N99. Intrachain disulfides connect C100–C325, C136–C179, C170–C212, and C270–C320. Positions 104–113 are excised as a propeptide; that stretch reads KSNYLRGTGP. The active site involves C139. An N-linked (GlcNAc...) asparagine glycan is attached at N228. Catalysis depends on residues H279 and N299.

The protein belongs to the peptidase C1 family. Composed of a mini chain and a large chain. The large chain may be split into heavy and light chain. All chains are held together by disulfide bonds. In terms of tissue distribution, widely expressed with highest expression found in non-skeletal tissues. Low levels found in skeletal tissue.

The protein resides in the lysosome. It carries out the reaction Hydrolysis of proteins, acting as an aminopeptidase (notably, cleaving Arg-|-Xaa bonds) as well as an endopeptidase.. Functionally, important for the overall degradation of proteins in lysosomes. The protein is Pro-cathepsin H (Ctsh) of Mus musculus (Mouse).